Consider the following 181-residue polypeptide: MLNEPLPSSMEDNPQFKEETSLQKFRRRLKEEPLIPLGCAATCYALYRAYRSMKAGDSVEMNKMFRARIYAQFFTLVAVVAGGMYFKTERQQRREFEKMVEQRKAQEKRDAWLRELEIRDKEDKDWRERHAAIEAAAKEAGKRPAPNKIPEQDAARSAIEPADEKSIGVLAAVRDLWMQQK.

An HIG1 domain is found at L6–E97. 2 helical membrane-spanning segments follow: residues P33–A49 and I69–F86. The segment at A136–E160 is disordered.

This sequence belongs to the RCF1 family. In terms of assembly, associates with the respiratory chain complex III/complex IV supercomplex.

It is found in the mitochondrion membrane. Its function is as follows. Cytochrome c oxidase subunit which plays a role in assembly of respiratory supercomplexes. This chain is Respiratory supercomplex factor 1, mitochondrial (rcf1), found in Neosartorya fischeri (strain ATCC 1020 / DSM 3700 / CBS 544.65 / FGSC A1164 / JCM 1740 / NRRL 181 / WB 181) (Aspergillus fischerianus).